Consider the following 159-residue polypeptide: Ecotin (159 aa).

Positions 1-22 (MRPTPMTAILALSLAAAAPAMA) are cleaved as a signal peptide. A disulfide bond links C68 and C105.

This sequence belongs to the protease inhibitor I11 (ecotin) family. Homodimer.

It localises to the periplasm. Its function is as follows. General inhibitor of family S1 serine proteases. The polypeptide is Ecotin (Pseudomonas putida (strain ATCC 700007 / DSM 6899 / JCM 31910 / BCRC 17059 / LMG 24140 / F1)).